A 328-amino-acid chain; its full sequence is GMP reductase (328 aa).

The Thioimidate intermediate role is filled by cysteine 176. 205–228 (IIADGGIRTHGDVAKSIRFGATMV) provides a ligand contact to NADP(+).

This sequence belongs to the IMPDH/GMPR family. GuaC type 2 subfamily.

The enzyme catalyses IMP + NH4(+) + NADP(+) = GMP + NADPH + 2 H(+). Catalyzes the irreversible NADPH-dependent deamination of GMP to IMP. It functions in the conversion of nucleobase, nucleoside and nucleotide derivatives of G to A nucleotides, and in maintaining the intracellular balance of A and G nucleotides. The protein is GMP reductase of Bacillus thuringiensis (strain Al Hakam).